A 440-amino-acid polypeptide reads, in one-letter code: Proline--tRNA ligase (440 aa).

Belongs to the class-II aminoacyl-tRNA synthetase family. ProS type 2 subfamily. As to quaternary structure, homodimer.

It is found in the cytoplasm. It carries out the reaction tRNA(Pro) + L-proline + ATP = L-prolyl-tRNA(Pro) + AMP + diphosphate. Functionally, catalyzes the attachment of proline to tRNA(Pro) in a two-step reaction: proline is first activated by ATP to form Pro-AMP and then transferred to the acceptor end of tRNA(Pro). In Agrobacterium fabrum (strain C58 / ATCC 33970) (Agrobacterium tumefaciens (strain C58)), this protein is Proline--tRNA ligase.